A 413-amino-acid chain; its full sequence is Serine hydroxymethyltransferase (413 aa).

(6S)-5,6,7,8-tetrahydrofolate is bound by residues Leu-117 and 121-123; that span reads GHL. An N6-(pyridoxal phosphate)lysine modification is found at Lys-226. Residues Glu-239 and 349 to 351 contribute to the (6S)-5,6,7,8-tetrahydrofolate site; that span reads SPF.

Belongs to the SHMT family. In terms of assembly, homodimer. Pyridoxal 5'-phosphate serves as cofactor.

It is found in the cytoplasm. The enzyme catalyses (6R)-5,10-methylene-5,6,7,8-tetrahydrofolate + glycine + H2O = (6S)-5,6,7,8-tetrahydrofolate + L-serine. Its pathway is one-carbon metabolism; tetrahydrofolate interconversion. The protein operates within amino-acid biosynthesis; glycine biosynthesis; glycine from L-serine: step 1/1. Catalyzes the reversible interconversion of serine and glycine with tetrahydrofolate (THF) serving as the one-carbon carrier. This reaction serves as the major source of one-carbon groups required for the biosynthesis of purines, thymidylate, methionine, and other important biomolecules. Also exhibits THF-independent aldolase activity toward beta-hydroxyamino acids, producing glycine and aldehydes, via a retro-aldol mechanism. The chain is Serine hydroxymethyltransferase from Bacillus cytotoxicus (strain DSM 22905 / CIP 110041 / 391-98 / NVH 391-98).